Consider the following 159-residue polypeptide: 4-deoxy-4-sulfo-D-erythrose isomerase (159 aa).

The active-site Proton acceptor is the C66.

It belongs to the LacAB/RpiB family.

The catalysed reaction is 4-deoxy-4-sulfo-D-erythrose = 4-deoxy-4-sulfo-D-erythrulose. Part of the sulfo-TK pathway, a D-sulfoquinovose degradation pathway that produces 2-hydroxyethane-1-sulfonate (isethionate). Catalyzes the isomerization of 4-deoxy-4-sulfo-D-erythrose (SE) to 4-deoxy-4-sulfo-D-erythrulose (SEu). In Clostridium sp. (strain MSTE9), this protein is 4-deoxy-4-sulfo-D-erythrose isomerase.